A 1589-amino-acid polypeptide reads, in one-letter code: Mediator of RNA polymerase II transcription subunit 23 (1589 aa).

The segment at 1381-1499 is disordered; it reads YVSQNEPAPP…PPTPAPMHHQ (119 aa). Residues 1392 to 1410 are compositionally biased toward basic and acidic residues; sequence TPEREKTPERKDQQKEQQE. Residues 1457–1470 show a composition bias toward low complexity; that stretch reads LHHQQQQQQHLSQM.

It belongs to the Mediator complex subunit 23 family. In terms of assembly, component of the Mediator complex.

Its subcellular location is the nucleus. In terms of biological role, component of the Mediator complex, a coactivator involved in the regulated transcription of nearly all RNA polymerase II-dependent genes. Mediator functions as a bridge to convey information from gene-specific regulatory proteins to the basal RNA polymerase II transcription machinery. Mediator is recruited to promoters by direct interactions with regulatory proteins and serves as a scaffold for the assembly of a functional preinitiation complex with RNA polymerase II and the general transcription factors. The sequence is that of Mediator of RNA polymerase II transcription subunit 23 (sur-2) from Caenorhabditis briggsae.